The chain runs to 620 residues: 1-deoxy-D-xylulose-5-phosphate synthase (620 aa).

Residues His-80 and 121–123 (GHS) contribute to the thiamine diphosphate site. Asp-152 contacts Mg(2+). Residues 153 to 154 (GA), Asn-181, Tyr-288, and Glu-370 each bind thiamine diphosphate. Asn-181 contributes to the Mg(2+) binding site.

It belongs to the transketolase family. DXPS subfamily. Homodimer. It depends on Mg(2+) as a cofactor. The cofactor is thiamine diphosphate.

It catalyses the reaction D-glyceraldehyde 3-phosphate + pyruvate + H(+) = 1-deoxy-D-xylulose 5-phosphate + CO2. It functions in the pathway metabolic intermediate biosynthesis; 1-deoxy-D-xylulose 5-phosphate biosynthesis; 1-deoxy-D-xylulose 5-phosphate from D-glyceraldehyde 3-phosphate and pyruvate: step 1/1. Its function is as follows. Catalyzes the acyloin condensation reaction between C atoms 2 and 3 of pyruvate and glyceraldehyde 3-phosphate to yield 1-deoxy-D-xylulose-5-phosphate (DXP). The polypeptide is 1-deoxy-D-xylulose-5-phosphate synthase (Salmonella arizonae (strain ATCC BAA-731 / CDC346-86 / RSK2980)).